A 212-amino-acid chain; its full sequence is External core antigen (212 aa).

The N-terminal stretch at 1–19 (MQLFHLCLIISCSCPTVQA) is a signal peptide. Residues 25–27 (GWL) are HBEAG. Residues 165 to 212 (NAPILSTLPETTVVRRRGRSPRRRTPSPRRRRSQSPRRRRSQSRESQC) form a disordered region. Positions 178–205 (VRRRGRSPRRRTPSPRRRRSQSPRRRRS) are enriched in basic residues. Residues 184–190 (SPRRRTP) form a 1; half-length repeat. A 3 X 8 AA repeats of S-P-R-R-R-R-S-Q region spans residues 184–206 (SPRRRTPSPRRRRSQSPRRRRSQ). The propeptide occupies 184-212 (SPRRRTPSPRRRRSQSPRRRRSQSRESQC). 2 tandem repeats follow at residues 191–198 (SPRRRRSQ) and 199–206 (SPRRRRSQ).

This sequence belongs to the orthohepadnavirus precore antigen family. Homodimerizes. Phosphorylated. Post-translationally, cleaved by host furin.

The protein localises to the secreted. The protein resides in the host nucleus. Functionally, may regulate immune response to the intracellular capsid in acting as a T-cell tolerogen, by having an immunoregulatory effect which prevents destruction of infected cells by cytotoxic T-cells. This immune regulation may predispose to chronicity during perinatal infections and prevent severe liver injury during adult infections. The chain is External core antigen from Homo sapiens (Human).